A 129-amino-acid polypeptide reads, in one-letter code: Aspartate 1-decarboxylase (129 aa).

Residue serine 25 is the Schiff-base intermediate with substrate; via pyruvic acid of the active site. A Pyruvic acid (Ser) modification is found at serine 25. A substrate-binding site is contributed by threonine 57. The Proton donor role is filled by tyrosine 58. Position 73-75 (73-75 (GAA)) interacts with substrate.

The protein belongs to the PanD family. In terms of assembly, heterooctamer of four alpha and four beta subunits. Requires pyruvate as cofactor. In terms of processing, is synthesized initially as an inactive proenzyme, which is activated by self-cleavage at a specific serine bond to produce a beta-subunit with a hydroxyl group at its C-terminus and an alpha-subunit with a pyruvoyl group at its N-terminus.

The protein localises to the cytoplasm. The catalysed reaction is L-aspartate + H(+) = beta-alanine + CO2. It functions in the pathway cofactor biosynthesis; (R)-pantothenate biosynthesis; beta-alanine from L-aspartate: step 1/1. Its function is as follows. Catalyzes the pyruvoyl-dependent decarboxylation of aspartate to produce beta-alanine. In Hydrogenovibrio crunogenus (strain DSM 25203 / XCL-2) (Thiomicrospira crunogena), this protein is Aspartate 1-decarboxylase.